The chain runs to 194 residues: HTH-type transcriptional regulator BetI (194 aa).

An HTH tetR-type domain is found at glutamate 8–leucine 68. Residues threonine 31–phenylalanine 50 constitute a DNA-binding region (H-T-H motif).

It functions in the pathway amine and polyamine biosynthesis; betaine biosynthesis via choline pathway [regulation]. Functionally, repressor involved in the biosynthesis of the osmoprotectant glycine betaine. It represses transcription of the choline transporter BetT and the genes of BetAB involved in the synthesis of glycine betaine. This chain is HTH-type transcriptional regulator BetI, found in Burkholderia cenocepacia (strain ATCC BAA-245 / DSM 16553 / LMG 16656 / NCTC 13227 / J2315 / CF5610) (Burkholderia cepacia (strain J2315)).